We begin with the raw amino-acid sequence, 148 residues long: Ribose-5-P isomerase B (148 aa).

A D-ribulose 5-phosphate-binding site is contributed by 8–9 (DE). Residue cysteine 65 is the Proton acceptor of the active site. D-ribulose 5-phosphate contacts are provided by residues 66 to 70 (GTGIG), asparagine 99, arginine 132, and lysine 136.

The protein belongs to the LacAB/RpiB family.

The enzyme catalyses aldehydo-D-ribose 5-phosphate = D-ribulose 5-phosphate. It functions in the pathway carbohydrate degradation; pentose phosphate pathway; D-ribose 5-phosphate from D-ribulose 5-phosphate (non-oxidative stage): step 1/1. In terms of biological role, catalyzes the interconversion of ribulose-5-P and ribose-5-P. In Listeria innocua serovar 6a (strain ATCC BAA-680 / CLIP 11262), this protein is Ribose-5-P isomerase B.